Reading from the N-terminus, the 537-residue chain is Syncytin-2 (537 aa).

A signal peptide spans 1 to 15 (MGLLLLVLILTPLLA). Topologically, residues 16–478 (AYRHPDFPLL…GWLNWEGTWK (463 aa)) are extracellular. Positions 43–46 (CWLC) match the CXXC motif. Intrachain disulfides connect Cys-43–Cys-46, Cys-43–Cys-439, and Cys-431–Cys-438. N-linked (GlcNAc...) asparagine glycans are attached at residues Asn-133, Asn-146, Asn-177, Asn-220, Asn-241, Asn-247, Asn-312, and Asn-332. Residues 354-374 (FIPLLAGLGILAGTGTGIAGI) are fusion peptide. Residues 414-430 (LQNRRGLDMLTAAQGGI) carry the CKS-17 motif. The short motif at 431–439 (CLALDEKCC) is the CX6CC element. Residue Asn-443 is glycosylated (N-linked (GlcNAc...) asparagine). A helical transmembrane segment spans residues 479–499 (WFSWVLPFIGPLVSLLLLLLF). Residues 500–537 (GPCLLNLITQFVSSRLQAIKLQTNGAGCRPRNIQESPF) are Cytoplasmic-facing.

The protein belongs to the gamma type-C retroviral envelope protein family. HERV class-I FRD env subfamily. As to quaternary structure, the surface and transmembrane proteins form a heterodimer. They are attached by non-covalent interactions or by a labile interchain disulfide bond. In terms of processing, specific enzymatic cleavages in vivo yield the mature SU and TM proteins. The CXXC motif is highly conserved across a broad range of retroviral envelope proteins. It is thought to participate in the formation of a labile disulfide bond possibly with the CX6CC motif present in the transmembrane protein.

Its subcellular location is the virion. It is found in the cell membrane. Functionally, this endogenous retroviral envelope protein has retained its original fusogenic properties and participates in trophoblast fusion and the formation of a syncytium during placenta morphogenesis. The interaction with MFSD2A is apparently important for this process. In terms of biological role, endogenous envelope proteins may have kept, lost or modified their original function during evolution but this one can still make pseudotypes with MLV, HIV-1 or SIV-1 virions and confer infectivity. Retroviral envelope proteins mediate receptor recognition and membrane fusion during early infection. The surface protein mediates receptor recognition, while the transmembrane protein anchors the envelope heterodimer to the viral membrane through one transmembrane domain. The other hydrophobic domain, called fusion peptide, mediates fusion of the viral membrane with the target cell membrane. In Macaca fascicularis (Crab-eating macaque), this protein is Syncytin-2 (ERVFRD-1).